Here is a 337-residue protein sequence, read N- to C-terminus: MEQQLPLLAPDSKAATSSPLCLTLDNPTSTSTSPAVPSSAPPPAAALEPSRQSFHERETDAIKAKIMSHPLYPALLRAFIDCQKVGAPPEVVGRLSALAGELDSRAEDRYLQGQSSDPELDEFMETYIDMLVSYRQELTRPIQEADQFFRNMEAQIDSFTLDDNGSEGGNSSEDEQEAGGGDMASAGLPEITSPCAEDKELKSHLLNKYSGYLSSLWRELSKKKKKGKLPRDARQKLLHWWQLHYRWPYPSELEKAALAESTGLDAKQINNWFINQRKRHWKPTPPAMEYRSLQPAGAASYGGASAGASTSGGGSAVVRGMEGQHFTGGGAYPRGDP.

Disordered regions lie at residues 1-56 (MEQQ…SFHE) and 159-190 (FTLDDNGSEGGNSSEDEQEAGGGDMASAGLPE). Residues 27–38 (PTSTSTSPAVPS) are compositionally biased toward low complexity. An ELK domain is found at 200–220 (ELKSHLLNKYSGYLSSLWREL). The segment at residues 221-284 (SKKKKKGKLP…NQRKRHWKPT (64 aa)) is a DNA-binding region (homeobox; TALE-type).

Belongs to the TALE/KNOX homeobox family.

It is found in the nucleus. The sequence is that of Homeobox protein knotted-1-like 4 (OSH10) from Oryza sativa subsp. japonica (Rice).